Reading from the N-terminus, the 212-residue chain is Large ribosomal subunit protein bL25 (212 aa).

Belongs to the bacterial ribosomal protein bL25 family. CTC subfamily. Part of the 50S ribosomal subunit; part of the 5S rRNA/L5/L18/L25 subcomplex. Contacts the 5S rRNA. Binds to the 5S rRNA independently of L5 and L18.

Functionally, this is one of the proteins that binds to the 5S RNA in the ribosome where it forms part of the central protuberance. This is Large ribosomal subunit protein bL25 from Leptospira interrogans serogroup Icterohaemorrhagiae serovar copenhageni (strain Fiocruz L1-130).